Here is a 416-residue protein sequence, read N- to C-terminus: MNKQSWLLNLSLLKTHPAFRAVFLARFISIVSLGLLGVAVPVQIQMMTHSTWQVGLSVTLTGGAMFVGLMVGGVLADRYERKKVILLARGTCGIGFIGLCLNALLPEPSLLAIYLLGLWDGFFASLGVTALLAATPALVGRENLMQAGAITMLTVRLGSVISPMIGGLLLATGGVAWNYGLAAAGTFITLLPLLSLPALPPPPQPREHPLKSLLAGFRFLLASPLVGGIALLGGLLTMASAVRVLYPALADNWQMSAAQIGFLYAAIPLGAAIGALTSGKLAHSARPGLLMLLSTLGSFLAIGLFGLMPMWILGVVCLALFGWLSAVSSLLQYTMLQTQTPEAMLGRINGLWTAQNVTGDAIGAALLGGLGAMMTPVASASASGFGLLIIGVLLLLVLVELRRFRQTPPQVTASDS.

Residues 1–21 (MNKQSWLLNLSLLKTHPAFRA) lie on the Cytoplasmic side of the membrane. The chain crosses the membrane as a helical span at residues 22 to 42 (VFLARFISIVSLGLLGVAVPV). The Periplasmic segment spans residues 43-55 (QIQMMTHSTWQVG). The helical transmembrane segment at 56-76 (LSVTLTGGAMFVGLMVGGVLA) threads the bilayer. Over 77–83 (DRYERKK) the chain is Cytoplasmic. Residues 84-104 (VILLARGTCGIGFIGLCLNAL) traverse the membrane as a helical segment. Residues 105–109 (LPEPS) are Periplasmic-facing. A helical membrane pass occupies residues 110 to 130 (LLAIYLLGLWDGFFASLGVTA). Topologically, residues 131 to 156 (LLAATPALVGRENLMQAGAITMLTVR) are cytoplasmic. A helical membrane pass occupies residues 157–177 (LGSVISPMIGGLLLATGGVAW). A topological domain (periplasmic) is located at residue Asn-178. A helical membrane pass occupies residues 179 to 199 (YGLAAAGTFITLLPLLSLPAL). The Cytoplasmic portion of the chain corresponds to 200–218 (PPPPQPREHPLKSLLAGFR). A helical transmembrane segment spans residues 219–239 (FLLASPLVGGIALLGGLLTMA). Residues 240-256 (SAVRVLYPALADNWQMS) are Periplasmic-facing. A helical transmembrane segment spans residues 257-277 (AAQIGFLYAAIPLGAAIGALT). Over 278-287 (SGKLAHSARP) the chain is Cytoplasmic. Residues 288 to 307 (GLLMLLSTLGSFLAIGLFGL) form a helical membrane-spanning segment. The Periplasmic segment spans residues 308–313 (MPMWIL). A helical membrane pass occupies residues 314 to 336 (GVVCLALFGWLSAVSSLLQYTML). Topologically, residues 337–356 (QTQTPEAMLGRINGLWTAQN) are cytoplasmic. The helical transmembrane segment at 357-377 (VTGDAIGAALLGGLGAMMTPV) threads the bilayer. A topological domain (periplasmic) is located at residue Ala-378. A helical transmembrane segment spans residues 379-399 (SASASGFGLLIIGVLLLLVLV). At 400–416 (ELRRFRQTPPQVTASDS) the chain is on the cytoplasmic side.

Belongs to the major facilitator superfamily. EntS (TC 2.A.1.38) family.

It localises to the cell inner membrane. Functionally, component of an export pathway for enterobactin. This Escherichia coli (strain 55989 / EAEC) protein is Enterobactin exporter EntS.